A 79-amino-acid polypeptide reads, in one-letter code: Sec-independent protein translocase protein TatA (79 aa).

Residues 1-21 form a helical membrane-spanning segment; it reads MGSFSIWHWLIVLAIVVLVFG. The tract at residues 43–79 is disordered; the sequence is VKDGSTSTDTPAAAPGQVAGQTAADKTTIDVEAKQKG. A compositionally biased stretch (basic and acidic residues) spans 69 to 79; the sequence is TTIDVEAKQKG.

Belongs to the TatA/E family. In terms of assembly, the Tat system comprises two distinct complexes: a TatABC complex, containing multiple copies of TatA, TatB and TatC subunits, and a separate TatA complex, containing only TatA subunits. Substrates initially bind to the TatABC complex, which probably triggers association of the separate TatA complex to form the active translocon.

The protein resides in the cell inner membrane. Part of the twin-arginine translocation (Tat) system that transports large folded proteins containing a characteristic twin-arginine motif in their signal peptide across membranes. TatA could form the protein-conducting channel of the Tat system. The chain is Sec-independent protein translocase protein TatA from Delftia acidovorans (strain DSM 14801 / SPH-1).